The sequence spans 247 residues: 3-deoxy-manno-octulosonate cytidylyltransferase (247 aa).

It belongs to the KdsB family.

It localises to the cytoplasm. It catalyses the reaction 3-deoxy-alpha-D-manno-oct-2-ulosonate + CTP = CMP-3-deoxy-beta-D-manno-octulosonate + diphosphate. It participates in nucleotide-sugar biosynthesis; CMP-3-deoxy-D-manno-octulosonate biosynthesis; CMP-3-deoxy-D-manno-octulosonate from 3-deoxy-D-manno-octulosonate and CTP: step 1/1. The protein operates within bacterial outer membrane biogenesis; lipopolysaccharide biosynthesis. Activates KDO (a required 8-carbon sugar) for incorporation into bacterial lipopolysaccharide in Gram-negative bacteria. The sequence is that of 3-deoxy-manno-octulosonate cytidylyltransferase from Chlorobium phaeobacteroides (strain DSM 266 / SMG 266 / 2430).